We begin with the raw amino-acid sequence, 699 residues long: Elongation factor G 1 (699 aa).

The region spanning 8 to 290 is the tr-type G domain; it reads EHYRNIGICA…AVIEFLPSPS (283 aa). Residues 17-24, 88-92, and 142-145 contribute to the GTP site; these read AHVDAGKT, DTPGH, and NKMD.

The protein belongs to the TRAFAC class translation factor GTPase superfamily. Classic translation factor GTPase family. EF-G/EF-2 subfamily.

Its subcellular location is the cytoplasm. Functionally, catalyzes the GTP-dependent ribosomal translocation step during translation elongation. During this step, the ribosome changes from the pre-translocational (PRE) to the post-translocational (POST) state as the newly formed A-site-bound peptidyl-tRNA and P-site-bound deacylated tRNA move to the P and E sites, respectively. Catalyzes the coordinated movement of the two tRNA molecules, the mRNA and conformational changes in the ribosome. The sequence is that of Elongation factor G 1 from Vibrio parahaemolyticus serotype O3:K6 (strain RIMD 2210633).